The chain runs to 219 residues: Probable GTP-binding protein EngB (219 aa).

The EngB-type G domain occupies 31 to 205 (VGVEIAFAGR…LSILNEWCHP (175 aa)). Residues 39 to 46 (GRSNAGKS), 66 to 70 (GRTQL), 84 to 87 (DLPG), 151 to 154 (TKSD), and 184 to 186 (FSA) contribute to the GTP site. Positions 46 and 68 each coordinate Mg(2+).

This sequence belongs to the TRAFAC class TrmE-Era-EngA-EngB-Septin-like GTPase superfamily. EngB GTPase family. Mg(2+) is required as a cofactor.

In terms of biological role, necessary for normal cell division and for the maintenance of normal septation. This chain is Probable GTP-binding protein EngB, found in Shewanella putrefaciens (strain CN-32 / ATCC BAA-453).